The chain runs to 249 residues: MADS-box transcription factor 7 (249 aa).

Residues 1-61 form the MADS-box domain; that stretch reads MGRGRVELKR…GKLYEFCSTQ (61 aa). One can recognise a K-box domain in the interval 90–180; sequence LKASRNEYLK…RRKLEESNHV (91 aa).

In terms of assembly, may interact with the K-box of MADS6. May interact with MADS13 and MADS18. As to expression, expressed in lodicules, stamens and carpels.

Its subcellular location is the nucleus. Probable transcription factor. May be involved in the control of flowering time. The polypeptide is MADS-box transcription factor 7 (MADS7) (Oryza sativa subsp. japonica (Rice)).